The chain runs to 146 residues: VPIQKVQDDTKTLIKTVITRINDISHTQSVSSKQKVTGLDFIPGLHPILTLSKMDQTLAVYQQILTSMPSRNVIQISNDLENLRDLLHVLAFSKSCHLPWASGLETLDRLGGVLEASGYSTEVVALSRLQRSLQDMLWQLDLSPGC.

A disulfide bond links cysteine 96 and cysteine 146.

Belongs to the leptin family.

It localises to the secreted. Its function is as follows. Key player in the regulation of energy balance and body weight control. Once released into the circulation, has central and peripheral effects by binding LEPR, found in many tissues, which results in the activation of several major signaling pathways. In the hypothalamus, acts as an appetite-regulating factor that induces a decrease in food intake and an increase in energy consumption by inducing anorexinogenic factors and suppressing orexigenic neuropeptides, also regulates bone mass and secretion of hypothalamo-pituitary-adrenal hormones. In the periphery, increases basal metabolism, influences reproductive function, regulates pancreatic beta-cell function and insulin secretion, is pro-angiogenic for endothelial cell and affects innate and adaptive immunity. In the arcuate nucleus of the hypothalamus, activates by depolarization POMC neurons inducing FOS and SOCS3 expression to release anorexigenic peptides and inhibits by hyperpolarization NPY neurons inducing SOCS3 with a consequent reduction on release of orexigenic peptides. In addition to its known satiety inducing effect, has a modulatory role in nutrient absorption. In the intestine, reduces glucose absorption by enterocytes by activating PKC and leading to a sequential activation of p38, PI3K and ERK signaling pathways which exerts an inhibitory effect on glucose absorption. Acts as a growth factor on certain tissues, through the activation of different signaling pathways increases expression of genes involved in cell cycle regulation such as CCND1, via JAK2-STAT3 pathway, or VEGFA, via MAPK1/3 and PI3K-AKT1 pathways. May also play an apoptotic role via JAK2-STAT3 pathway and up-regulation of BIRC5 expression. Pro-angiogenic, has mitogenic activity on vascular endothelial cells and plays a role in matrix remodeling by regulating the expression of matrix metalloproteinases (MMPs) and tissue inhibitors of metalloproteinases (TIMPs). In innate immunity, modulates the activity and function of neutrophils by increasing chemotaxis and the secretion of oxygen radicals. Increases phagocytosis by macrophages and enhances secretion of pro-inflammatory mediators. Increases cytotoxic ability of NK cells. Plays a pro-inflammatory role, in synergy with IL1B, by inducing NOS2 which promotes the production of IL6, IL8 and Prostaglandin E2, through a signaling pathway that involves JAK2, PI3K, MAP2K1/MEK1 and MAPK14/p38. In adaptive immunity, promotes the switch of memory T-cells towards T helper-1 cell immune responses. Increases CD4(+)CD25(-) T-cell proliferation and reduces autophagy during TCR (T-cell receptor) stimulation, through MTOR signaling pathway activation and BCL2 up-regulation. The polypeptide is Leptin (LEP) (Pongo pygmaeus (Bornean orangutan)).